Here is an 87-residue protein sequence, read N- to C-terminus: Defensin-like protein 176 (87 aa).

The first 23 residues, 1–23 (MAKATSSLVVPIIFLVIFALVEQ), serve as a signal peptide directing secretion. 4 cysteine pairs are disulfide-bonded: C27-C66, C36-C55, C39-C60, and C43-C62.

This sequence belongs to the DEFL family.

It is found in the secreted. The chain is Defensin-like protein 176 (LCR65) from Arabidopsis thaliana (Mouse-ear cress).